Here is a 96-residue protein sequence, read N- to C-terminus: Co-chaperonin GroES (96 aa).

Belongs to the GroES chaperonin family. In terms of assembly, heptamer of 7 subunits arranged in a ring. Interacts with the chaperonin GroEL.

Its subcellular location is the cytoplasm. In terms of biological role, together with the chaperonin GroEL, plays an essential role in assisting protein folding. The GroEL-GroES system forms a nano-cage that allows encapsulation of the non-native substrate proteins and provides a physical environment optimized to promote and accelerate protein folding. GroES binds to the apical surface of the GroEL ring, thereby capping the opening of the GroEL channel. In Colwellia maris, this protein is Co-chaperonin GroES.